Reading from the N-terminus, the 336-residue chain is Mitochondrial thiamine pyrophosphate carrier 1 (336 aa).

3 Solcar repeats span residues 11 to 98 (ISST…VNQV), 112 to 202 (SSGA…VKDS), and 221 to 323 (TKGW…SLSI). Helical transmembrane passes span 17 to 37 (MLCG…LDVV), 66 to 86 (GVTA…FYGA), 118 to 138 (FIAG…FDLF), 177 to 197 (GVSS…ASYG), 228 to 244 (TAGL…VFPL), and 298 to 315 (GFLV…ITMY).

It belongs to the mitochondrial carrier (TC 2.A.29) family.

It localises to the mitochondrion inner membrane. Mitochondrial transporter that mediates uptake of thiamine pyrophosphate (ThPP) into mitochondria. The sequence is that of Mitochondrial thiamine pyrophosphate carrier 1 (TPC1) from Yarrowia lipolytica (strain CLIB 122 / E 150) (Yeast).